The chain runs to 89 residues: Small ribosomal subunit protein bS20 (89 aa).

Basic and acidic residues predominate over residues 1–11 (MANHKSAEKRN). Residues 1–30 (MANHKSAEKRNRQNQVARLRNKSTRTAMKN) form a disordered region.

Belongs to the bacterial ribosomal protein bS20 family.

Its function is as follows. Binds directly to 16S ribosomal RNA. The chain is Small ribosomal subunit protein bS20 from Desulfotalea psychrophila (strain LSv54 / DSM 12343).